The chain runs to 274 residues: 4-diphosphocytidyl-2-C-methyl-D-erythritol kinase (274 aa).

Lys-8 is an active-site residue. 94 to 104 provides a ligand contact to ATP; that stretch reads PSGAGLGGGSS. Asp-136 is an active-site residue.

The protein belongs to the GHMP kinase family. IspE subfamily.

The enzyme catalyses 4-CDP-2-C-methyl-D-erythritol + ATP = 4-CDP-2-C-methyl-D-erythritol 2-phosphate + ADP + H(+). The protein operates within isoprenoid biosynthesis; isopentenyl diphosphate biosynthesis via DXP pathway; isopentenyl diphosphate from 1-deoxy-D-xylulose 5-phosphate: step 3/6. Catalyzes the phosphorylation of the position 2 hydroxy group of 4-diphosphocytidyl-2C-methyl-D-erythritol. The sequence is that of 4-diphosphocytidyl-2-C-methyl-D-erythritol kinase from Bacteroides thetaiotaomicron (strain ATCC 29148 / DSM 2079 / JCM 5827 / CCUG 10774 / NCTC 10582 / VPI-5482 / E50).